Here is a 439-residue protein sequence, read N- to C-terminus: Phthalate 4,5-dioxygenase oxygenase subunit (439 aa).

The 108-residue stretch at W27–A134 folds into the Rieske domain. [2Fe-2S] cluster-binding residues include C70, H72, C89, and H92. Positions 181 and 186 each coordinate Fe cation.

Belongs to the bacterial ring-hydroxylating dioxygenase alpha subunit family. As to quaternary structure, this dioxygenase system consists of two proteins: phthalate oxygenase and phthalate oxygenase reductase. The cofactor is [2Fe-2S] cluster. Fe cation serves as cofactor.

It carries out the reaction phthalate + NADH + O2 + H(+) = cis-4,5-dihydroxycyclohexa-2,6-diene-1,2-dicarboxylate + NAD(+). Its pathway is xenobiotic degradation; phthalate degradation; 3,4-dihydroxybenzoate from phthalate: step 1/3. In Pseudomonas putida (Arthrobacter siderocapsulatus), this protein is Phthalate 4,5-dioxygenase oxygenase subunit (pht3).